The following is a 160-amino-acid chain: MKARVVLQQCLHARLQVKPPDEESEAEWVEVNRGMVIYICFFKGATEDLIPKMVNTLLNVKLCETESGKFTSVLQLPGSVLIVPQATLGGKPKGRGMQYHGNIGKDEGLKLYETFVSLCQSELSSCKNSDILTEVKHGTYGNRQVLKLDTNGPYTHLMEF.

The Gly-transPro motif, allows the protein to recognize chirality of D-amino acids motif lies at 152–153; it reads GP.

Belongs to the DTD family. As to quaternary structure, homodimer.

It localises to the cytoplasm. It carries out the reaction a D-aminoacyl-tRNA + H2O = a tRNA + a D-alpha-amino acid + H(+). It catalyses the reaction glycyl-tRNA(Ala) + H2O = tRNA(Ala) + glycine + H(+). The catalysed reaction is D-tyrosyl-tRNA(Tyr) + H2O = D-tyrosine + tRNA(Tyr). The enzyme catalyses L-alanyl-tRNA(Thr) + H2O = tRNA(Thr) + L-alanine + H(+). In terms of biological role, deacylates mischarged D-aminoacyl-tRNAs. Also deacylates mischarged glycyl-tRNA(Ala), protecting cells against glycine mischarging by AlaRS. Probably acts by rejecting L-amino acids from its binding site rather than specific recognition of D-amino acids. Catalyzes the hydrolysis of D-tyrosyl-tRNA(Tyr), has no activity on correctly charged L-tyrosyl-tRNA(Tyr). By recycling D-aminoacyl-tRNA to D-amino acids and free tRNA molecules, this enzyme counteracts the toxicity associated with the formation of D-aminoacyl-tRNA entities in vivo and helps enforce protein L-homochirality. In contrast to DTD1, deacylates L-Ala mischarged on tRNA(Thr)(G4.U69) by alanine-tRNA ligase AARS. Can deacylate L-Ala due to a relaxed specificity for substrate chirality caused by the trans conformation of the Gly-Pro motif in the active site. Also hydrolyzes correctly charged, achiral, glycyl-tRNA(Gly) in vitro, although in vivo eef1a1a/EF-Tu may protect cognate achiral glycyl-tRNA(Gly) from DTD2-mediated deacetylation. The protein is D-aminoacyl-tRNA deacylase 2 (dtd2) of Danio rerio (Zebrafish).